Here is a 207-residue protein sequence, read N- to C-terminus: dTTP/UTP pyrophosphatase (207 aa).

The active-site Proton acceptor is the Asp-80.

It belongs to the Maf family. YhdE subfamily. The cofactor is a divalent metal cation.

It is found in the cytoplasm. It catalyses the reaction dTTP + H2O = dTMP + diphosphate + H(+). The enzyme catalyses UTP + H2O = UMP + diphosphate + H(+). Its function is as follows. Nucleoside triphosphate pyrophosphatase that hydrolyzes dTTP and UTP. May have a dual role in cell division arrest and in preventing the incorporation of modified nucleotides into cellular nucleic acids. The polypeptide is dTTP/UTP pyrophosphatase (maf1) (Agrobacterium fabrum (strain C58 / ATCC 33970) (Agrobacterium tumefaciens (strain C58))).